A 461-amino-acid polypeptide reads, in one-letter code: Deoxyguanosinetriphosphate triphosphohydrolase-like protein (461 aa).

Residues 22–41 (ERFLPDPPREKDNRPPFRRD) are disordered. The segment covering 24–41 (FLPDPPREKDNRPPFRRD) has biased composition (basic and acidic residues). Positions 72 to 285 (RLTHSLEVAQ…MELADDIAYG (214 aa)) constitute an HD domain.

Belongs to the dGTPase family. Type 2 subfamily.

The protein is Deoxyguanosinetriphosphate triphosphohydrolase-like protein of Haemophilus influenzae (strain PittEE).